The chain runs to 196 residues: Pyridoxine/pyridoxamine 5'-phosphate oxidase (196 aa).

FMN contacts are provided by residues 46–51 (RNVLYK), 61–62 (FT), Arg-67, Lys-68, and Gln-90. Lys-51 is a binding site for substrate. Substrate contacts are provided by Tyr-108, Arg-112, and Ser-116. Residues 125–126 (QS) and Trp-169 contribute to the FMN site. 175 to 177 (RLH) is a binding site for substrate. FMN is bound at residue Arg-179.

Belongs to the pyridoxamine 5'-phosphate oxidase family. In terms of assembly, homodimer. FMN is required as a cofactor.

It catalyses the reaction pyridoxamine 5'-phosphate + O2 + H2O = pyridoxal 5'-phosphate + H2O2 + NH4(+). It carries out the reaction pyridoxine 5'-phosphate + O2 = pyridoxal 5'-phosphate + H2O2. It functions in the pathway cofactor metabolism; pyridoxal 5'-phosphate salvage; pyridoxal 5'-phosphate from pyridoxamine 5'-phosphate: step 1/1. The protein operates within cofactor metabolism; pyridoxal 5'-phosphate salvage; pyridoxal 5'-phosphate from pyridoxine 5'-phosphate: step 1/1. In terms of biological role, catalyzes the oxidation of either pyridoxine 5'-phosphate (PNP) or pyridoxamine 5'-phosphate (PMP) into pyridoxal 5'-phosphate (PLP). The chain is Pyridoxine/pyridoxamine 5'-phosphate oxidase from Coxiella burnetii (strain RSA 493 / Nine Mile phase I).